Here is a 261-residue protein sequence, read N- to C-terminus: Small ribosomal subunit protein eS4B (261 aa).

S32 carries the phosphoserine modification. Positions L42–V105 constitute an S4 RNA-binding domain. K62 is covalently cross-linked (Glycyl lysine isopeptide (Lys-Gly) (interchain with G-Cter in ubiquitin)). Residue T115 is modified to Phosphothreonine. Glycyl lysine isopeptide (Lys-Gly) (interchain with G-Cter in ubiquitin) cross-links involve residues K134, K161, K168, K174, K179, K211, and K233. S247 is subject to Phosphoserine.

The protein belongs to the eukaryotic ribosomal protein eS4 family. Component of the small ribosomal subunit (SSU). Mature yeast ribosomes consist of a small (40S) and a large (60S) subunit. The 40S small subunit contains 1 molecule of ribosomal RNA (18S rRNA) and 33 different proteins (encoded by 57 genes). The large 60S subunit contains 3 rRNA molecules (25S, 5.8S and 5S rRNA) and 46 different proteins (encoded by 81 genes).

The protein resides in the cytoplasm. Its function is as follows. Component of the ribosome, a large ribonucleoprotein complex responsible for the synthesis of proteins in the cell. The small ribosomal subunit (SSU) binds messenger RNAs (mRNAs) and translates the encoded message by selecting cognate aminoacyl-transfer RNA (tRNA) molecules. The large subunit (LSU) contains the ribosomal catalytic site termed the peptidyl transferase center (PTC), which catalyzes the formation of peptide bonds, thereby polymerizing the amino acids delivered by tRNAs into a polypeptide chain. The nascent polypeptides leave the ribosome through a tunnel in the LSU and interact with protein factors that function in enzymatic processing, targeting, and the membrane insertion of nascent chains at the exit of the ribosomal tunnel. This chain is Small ribosomal subunit protein eS4B, found in Saccharomyces cerevisiae (strain ATCC 204508 / S288c) (Baker's yeast).